The chain runs to 180 residues: ATP-dependent protease subunit HslV (180 aa).

The active site involves threonine 5. Residues glycine 165, cysteine 168, and threonine 171 each contribute to the Na(+) site.

It belongs to the peptidase T1B family. HslV subfamily. A double ring-shaped homohexamer of HslV is capped on each side by a ring-shaped HslU homohexamer. The assembly of the HslU/HslV complex is dependent on binding of ATP.

It localises to the cytoplasm. The enzyme catalyses ATP-dependent cleavage of peptide bonds with broad specificity.. Allosterically activated by HslU binding. Functionally, protease subunit of a proteasome-like degradation complex believed to be a general protein degrading machinery. This is ATP-dependent protease subunit HslV from Helicobacter pylori (strain HPAG1).